Reading from the N-terminus, the 495-residue chain is Tubulin epsilon and delta complex protein 1 (495 aa).

Residues 355 to 387 adopt a coiled-coil conformation; sequence GGELDLVVRELQALEEELREAAERRRAAWEAKA. Residues 417 to 440 are disordered; sequence CWERDGGPAQPHGPHRLVRREDGA. A coiled-coil region spans residues 452-480; that stretch reads IRTLRSQEACLEAVLRRLQGQCRQELARL.

In terms of assembly, interacts with TEDC2. Found in a complex with TEDC1, TEDC2, TUBE1 and TUBD1.

Its subcellular location is the cell projection. The protein resides in the cilium. It is found in the cytoplasm. It localises to the cytoskeleton. The protein localises to the microtubule organizing center. Its subcellular location is the centrosome. The protein resides in the centriole. Functionally, acts as a positive regulator of ciliary hedgehog signaling. Required for centriole stability. May play a role in counteracting perturbation of actin filaments, such as after treatment with the actin depolymerizing microbial metabolite Chivosazole F. This is Tubulin epsilon and delta complex protein 1 from Homo sapiens (Human).